Consider the following 167-residue polypeptide: Leptin (167 aa).

Positions 1–21 (MHCVPLFCFLWFCHHLYYSQA) are cleaved as a signal peptide. The cysteines at positions 117 and 167 are disulfide-linked.

Belongs to the leptin family.

The protein localises to the secreted. Key player in the regulation of energy balance and body weight control. Once released into the circulation, has central and peripheral effects by binding LEPR, found in many tissues, which results in the activation of several major signaling pathways. In the hypothalamus, acts as an appetite-regulating factor that induces a decrease in food intake and an increase in energy consumption by inducing anorexinogenic factors and suppressing orexigenic neuropeptides, also regulates bone mass and secretion of hypothalamo-pituitary-adrenal hormones. In the periphery, increases basal metabolism, influences reproductive function, regulates pancreatic beta-cell function and insulin secretion, is pro-angiogenic for endothelial cell and affects innate and adaptive immunity. In the arcuate nucleus of the hypothalamus, activates by depolarization POMC neurons inducing FOS and SOCS3 expression to release anorexigenic peptides and inhibits by hyperpolarization NPY neurons inducing SOCS3 with a consequent reduction on release of orexigenic peptides. In addition to its known satiety inducing effect, has a modulatory role in nutrient absorption. In the intestine, reduces glucose absorption by enterocytes by activating PKC and leading to a sequential activation of p38, PI3K and ERK signaling pathways which exerts an inhibitory effect on glucose absorption. Acts as a growth factor on certain tissues, through the activation of different signaling pathways increases expression of genes involved in cell cycle regulation such as CCND1, via JAK2-STAT3 pathway, or VEGFA, via MAPK1/3 and PI3K-AKT1 pathways. May also play an apoptotic role via JAK2-STAT3 pathway and up-regulation of BIRC5 expression. Pro-angiogenic, has mitogenic activity on vascular endothelial cells and plays a role in matrix remodeling by regulating the expression of matrix metalloproteinases (MMPs) and tissue inhibitors of metalloproteinases (TIMPs). In innate immunity, modulates the activity and function of neutrophils by increasing chemotaxis and the secretion of oxygen radicals. Increases phagocytosis by macrophages and enhances secretion of pro-inflammatory mediators. Increases cytotoxic ability of NK cells. Plays a pro-inflammatory role, in synergy with IL1B, by inducing NOS2 which promotes the production of IL6, IL8 and Prostaglandin E2, through a signaling pathway that involves JAK2, PI3K, MAP2K1/MEK1 and MAPK14/p38. In adaptive immunity, promotes the switch of memory T-cells towards T helper-1 cell immune responses. Increases CD4(+)CD25(-) T-cell proliferation and reduces autophagy during TCR (T-cell receptor) stimulation, through MTOR signaling pathway activation and BCL2 up-regulation. In Sminthopsis crassicaudata (Fat-tailed dunnart), this protein is Leptin (LEP).